Reading from the N-terminus, the 171-residue chain is Small ribosomal subunit protein uS5 (171 aa).

One can recognise an S5 DRBM domain in the interval 12-75; that stretch reads LKEKLISVNR…EKARRNMIQV (64 aa).

The protein belongs to the universal ribosomal protein uS5 family. Part of the 30S ribosomal subunit. Contacts proteins S4 and S8.

Functionally, with S4 and S12 plays an important role in translational accuracy. Its function is as follows. Located at the back of the 30S subunit body where it stabilizes the conformation of the head with respect to the body. This Buchnera aphidicola subsp. Baizongia pistaciae (strain Bp) protein is Small ribosomal subunit protein uS5.